The following is a 422-amino-acid chain: Serine--tRNA ligase (422 aa).

T229–E231 provides a ligand contact to L-serine. R260–E262 is an ATP binding site. Position 283 (E283) interacts with L-serine. E347–S350 serves as a coordination point for ATP. S383 provides a ligand contact to L-serine.

It belongs to the class-II aminoacyl-tRNA synthetase family. Type-1 seryl-tRNA synthetase subfamily. In terms of assembly, homodimer. The tRNA molecule binds across the dimer.

It is found in the cytoplasm. It carries out the reaction tRNA(Ser) + L-serine + ATP = L-seryl-tRNA(Ser) + AMP + diphosphate + H(+). The catalysed reaction is tRNA(Sec) + L-serine + ATP = L-seryl-tRNA(Sec) + AMP + diphosphate + H(+). It participates in aminoacyl-tRNA biosynthesis; selenocysteinyl-tRNA(Sec) biosynthesis; L-seryl-tRNA(Sec) from L-serine and tRNA(Sec): step 1/1. Catalyzes the attachment of serine to tRNA(Ser). Is also able to aminoacylate tRNA(Sec) with serine, to form the misacylated tRNA L-seryl-tRNA(Sec), which will be further converted into selenocysteinyl-tRNA(Sec). The polypeptide is Serine--tRNA ligase (Geobacter sulfurreducens (strain ATCC 51573 / DSM 12127 / PCA)).